We begin with the raw amino-acid sequence, 155 residues long: uncharacterized protein (155 aa).

Residues 6–155 (LRIELGEETN…RDMVRLYLDL (150 aa)) enclose the N-acetyltransferase domain. Residues 69–71 (IAV), 77–82 (KKGFGK), and 111–117 (QLSLYQK) contribute to the CoA site.

Functionally, probable N-acetyltransferase. This is an uncharacterized protein from Bacillus subtilis (strain 168).